Here is a 533-residue protein sequence, read N- to C-terminus: Ribonuclease Y (533 aa).

The interval 16–41 (VERIRRRAEQDAAEQTERVRREAEQI) is disordered. The span at 22 to 41 (RAEQDAAEQTERVRREAEQI) shows a compositional bias: basic and acidic residues. Residues 223–289 (VVSVLHLPSD…RITLTALVSD (67 aa)) enclose the KH domain. Residues 349–442 (VLAHLVESAH…TQAADQISGG (94 aa)) enclose the HD domain.

The protein belongs to the RNase Y family.

Its function is as follows. Endoribonuclease that initiates mRNA decay. The protein is Ribonuclease Y of Parafrankia sp. (strain EAN1pec).